Reading from the N-terminus, the 511-residue chain is MATKLSEQEIIRHQKMNELKKINIDPFGKKFVPSHSIEQILLQYQKADSLALEQSQIHVCVAGRIVLKRGQGKAGFLHLQDFNFRMQAYIKLDLVGKDAFQIYQNCDLGDIIGIKGFLFKTKTQELTIKALEFIHLTKALKPLPDKFHGLQNREEMRKNRYVDLIVNEKTRQVFLTRSLIMKYIRNFFDNQGFLEVETPILQPTLGGASAKPFITHHNALNCDFYLRIATELPLKKLIVGGMNKVYEIGRLFRNEGIDATHNPEFSTIEAYLAYADMQDIMDLTKQCLQELAQKLFGKLQFTYQNQEIDFSHFAKVSMVASIKEKTGIDFTDNFTLEQCLSLAKKHQIEVMPHFSQGHIIEAFFGKYVENTLIQPTFVYGHPLEISPLAKQNEADPRFTDRFELFIVGKEFANAFSELNDPIEQEKRFLNQLQQKQLGNDEANDMDYDFLNALNYGMPPTGGLGMGLDRLVMLLTDTANIRDVILFPHCKNQNKFSQNKTANKVLTNNDNE.

Glu403 and Glu410 together coordinate Mg(2+).

This sequence belongs to the class-II aminoacyl-tRNA synthetase family. Homodimer. Requires Mg(2+) as cofactor.

It is found in the cytoplasm. The catalysed reaction is tRNA(Lys) + L-lysine + ATP = L-lysyl-tRNA(Lys) + AMP + diphosphate. In Onion yellows phytoplasma (strain OY-M), this protein is Lysine--tRNA ligase.